A 415-amino-acid polypeptide reads, in one-letter code: Putative FNIP repeat-containing protein L415 (415 aa).

One copy of the FNIP repeat lies at 148-185 (FIKKGAIPDSVTHLYFGSDYLSKDIIPKNVVYLRFGDF).

The sequence is that of Putative FNIP repeat-containing protein L415 from Acanthamoeba polyphaga mimivirus (APMV).